We begin with the raw amino-acid sequence, 156 residues long: Probable cyclic pyranopterin monophosphate synthase (156 aa).

Substrate contacts are provided by residues 73–75 (MCH) and 109–110 (ME). Residue D124 is part of the active site.

It belongs to the MoaC family. As to quaternary structure, homohexamer; trimer of dimers.

The catalysed reaction is (8S)-3',8-cyclo-7,8-dihydroguanosine 5'-triphosphate = cyclic pyranopterin phosphate + diphosphate. It participates in cofactor biosynthesis; molybdopterin biosynthesis. Catalyzes the conversion of (8S)-3',8-cyclo-7,8-dihydroguanosine 5'-triphosphate to cyclic pyranopterin monophosphate (cPMP). This chain is Probable cyclic pyranopterin monophosphate synthase, found in Archaeoglobus fulgidus (strain ATCC 49558 / DSM 4304 / JCM 9628 / NBRC 100126 / VC-16).